A 255-amino-acid chain; its full sequence is Hydroxyacylglutathione hydrolase (255 aa).

Residues His-56, His-58, Asp-60, His-61, His-112, Asp-129, and His-167 each coordinate Zn(2+).

Belongs to the metallo-beta-lactamase superfamily. Glyoxalase II family. Monomer. Requires Zn(2+) as cofactor.

The catalysed reaction is an S-(2-hydroxyacyl)glutathione + H2O = a 2-hydroxy carboxylate + glutathione + H(+). Its pathway is secondary metabolite metabolism; methylglyoxal degradation; (R)-lactate from methylglyoxal: step 2/2. In terms of biological role, thiolesterase that catalyzes the hydrolysis of S-D-lactoyl-glutathione to form glutathione and D-lactic acid. This is Hydroxyacylglutathione hydrolase from Pseudomonas fluorescens (strain SBW25).